The sequence spans 300 residues: MSYRELVAELPREHAEALSDALVELGALSVSVEDADADTPDEQPLFGEPGLVPERTAWQHSRVIALVDATQDPAVLLAAAANEAGLAQTPRFELREVEEQDWVRLTQSQFEPIHIGEKIWVVPSWHDAPQPDALVLELDPGLAFGTGSHPTTRLCMEWLEQTVQPGQTVLDYGCGSGILAILAKKCGAGRVTGIDIDPQAVEAARHNSERNRADVTYGLPDDCPDGEFDIVVANILSNPLKLMASMLASKVKPGGRIALSGVLARQADEVASVYARYIDIAVWREHEGWVCLAGTRRESH.

Residues Thr152, Gly173, Asp195, and Asn234 each coordinate S-adenosyl-L-methionine.

Belongs to the methyltransferase superfamily. PrmA family.

The protein resides in the cytoplasm. The catalysed reaction is L-lysyl-[protein] + 3 S-adenosyl-L-methionine = N(6),N(6),N(6)-trimethyl-L-lysyl-[protein] + 3 S-adenosyl-L-homocysteine + 3 H(+). Functionally, methylates ribosomal protein L11. This Burkholderia mallei (strain NCTC 10247) protein is Ribosomal protein L11 methyltransferase.